Consider the following 230-residue polypeptide: Response regulator MprA (230 aa).

The Response regulatory domain maps to 4 to 118 (RILVVDDDRA…ELLARMRALL (115 aa)). At D48 the chain carries 4-aspartylphosphate. The segment at residues 129-227 (SPALTFLDLT…VRGVGYVLRE (99 aa)) is a DNA-binding region (ompR/PhoB-type).

Post-translationally, phosphorylated and dephosphorylated by MprB.

Its subcellular location is the cytoplasm. In terms of biological role, member of the two-component regulatory system MprB/MprA which contributes to maintaining a balance among several systems involved in stress resistance and is required for establishment and maintenance of persistent infection in the host. Functions as a transcriptional regulator that recognizes a 19-bp nucleotide motif comprizing two loosely conserved 8-bp direct DNA-binding motif repeats separated by a 3-bp spacer region. This is Response regulator MprA (mprA) from Mycobacterium sp. (strain JLS).